The chain runs to 101 residues: MSQIKDRVEKLIQTNPVMMFSKSFCPYCKKAKATLKELNVEPGICELDEDSEGRAIQDYLKEKTSQNTVPNIFIKGQHVGGCDDLLAAKDNGSLSKMIAAL.

The region spanning 5 to 101 (KDRVEKLIQT…GSLSKMIAAL (97 aa)) is the Glutaredoxin domain. A disulfide bridge connects residues Cys25 and Cys28.

Belongs to the glutaredoxin family.

It is found in the cytoplasm. It localises to the cytosol. In terms of biological role, multifunctional enzyme with glutathione-dependent oxidoreductase, glutathione peroxidase and glutathione S-transferase (GST) activity. The disulfide bond functions as an electron carrier in the glutathione-dependent synthesis of deoxyribonucleotides by the enzyme ribonucleotide reductase. In addition, it is also involved in reducing cytosolic protein- and non-protein-disulfides in a coupled system with glutathione reductase. May play a role in protection against oxidative stress caused by superoxide in vivo by regulating the redox state of the protein sulfhydryl groups. This is Glutaredoxin-1 from Rhizophagus irregularis (strain DAOM 181602 / DAOM 197198 / MUCL 43194) (Arbuscular mycorrhizal fungus).